The following is a 1770-amino-acid chain: Transposon Ty2-C Gag-Pol polyprotein (1770 aa).

3 stretches are compositionally biased toward polar residues: residues 1 to 11, 19 to 39, and 49 to 60; these read MESQQLHQNPR, ASVT…SASN, and KVNSQQETTPGT. Disordered regions lie at residues 1–88 and 355–453; these read MESQ…YQQH and SQYK…LPDH. The tract at residues 295 to 397 is RNA-binding; that stretch reads ENNINVSDRL…SSKPRAAKAH (103 aa). Residues 369 to 382 show a composition bias toward low complexity; that stretch reads TSPNTTNTKVTTRN. Polar residues-rich tracts occupy residues 399–408 and 415–435; these read IATSSKFSRV and ESTV…GQQQ. Catalysis depends on D457, which acts as the For protease activity; shared with dimeric partner. The integrase-type zinc finger-like stretch occupies residues 579–636; it reads NVNKSKSVNKYPYPLIHRMLGHANFRSIQKSLKKNAVTYLKESDIEWSNASTYQCPDC. Positions 656–831 constitute an Integrase catalytic domain; the sequence is ESYEPFQYLH…AGLDITTILP (176 aa). Mg(2+)-binding residues include D667 and D732. Disordered stretches follow at residues 1003 to 1038 and 1057 to 1205; these read EMGG…MIDL and GGTE…TEIE. Composition is skewed to polar residues over residues 1009 to 1024 and 1065 to 1082; these read ESDT…FTAR and QRNS…STPS. The Bipartite nuclear localization signal signature appears at 1193-1227; sequence KKRSLEDNETEIEVSRDTWNNKNMRSLEPPRSKKR. The Reverse transcriptase Ty1/copia-type domain maps to 1353 to 1491; the sequence is NDYYITQLDI…DILGLEIKYQ (139 aa). Residues D1361, D1442, D1443, D1625, E1667, and D1700 each contribute to the Mg(2+) site. One can recognise an RNase H Ty1/copia-type domain in the interval 1625 to 1767; sequence DASYGNQPYY…IKTFKLLTNK (143 aa).

In terms of assembly, the capsid protein forms a homotrimer, from which the VLPs are assembled. The protease is a homodimer, whose active site consists of two apposed aspartic acid residues. In terms of processing, initially, virus-like particles (VLPs) are composed of the structural unprocessed proteins Gag and Gag-Pol, and also contain the host initiator methionine tRNA (tRNA(i)-Met) which serves as a primer for minus-strand DNA synthesis, and a dimer of genomic Ty RNA. Processing of the polyproteins occurs within the particle and proceeds by an ordered pathway, called maturation. First, the protease (PR) is released by autocatalytic cleavage of the Gag-Pol polyprotein, and this cleavage is a prerequisite for subsequent processing at the remaining sites to release the mature structural and catalytic proteins. Maturation takes place prior to the RT reaction and is required to produce transposition-competent VLPs.

The protein resides in the cytoplasm. Its subcellular location is the nucleus. The catalysed reaction is DNA(n) + a 2'-deoxyribonucleoside 5'-triphosphate = DNA(n+1) + diphosphate. It carries out the reaction Endonucleolytic cleavage to 5'-phosphomonoester.. Capsid protein (CA) is the structural component of the virus-like particle (VLP), forming the shell that encapsulates the retrotransposons dimeric RNA genome. The particles are assembled from trimer-clustered units and there are holes in the capsid shells that allow for the diffusion of macromolecules. CA also has nucleocapsid-like chaperone activity, promoting primer tRNA(i)-Met annealing to the multipartite primer-binding site (PBS), dimerization of Ty2 RNA and initiation of reverse transcription. Its function is as follows. The aspartyl protease (PR) mediates the proteolytic cleavages of the Gag and Gag-Pol polyproteins after assembly of the VLP. In terms of biological role, reverse transcriptase/ribonuclease H (RT) is a multifunctional enzyme that catalyzes the conversion of the retro-elements RNA genome into dsDNA within the VLP. The enzyme displays a DNA polymerase activity that can copy either DNA or RNA templates, and a ribonuclease H (RNase H) activity that cleaves the RNA strand of RNA-DNA heteroduplexes during plus-strand synthesis and hydrolyzes RNA primers. The conversion leads to a linear dsDNA copy of the retrotransposon that includes long terminal repeats (LTRs) at both ends. Functionally, integrase (IN) targets the VLP to the nucleus, where a subparticle preintegration complex (PIC) containing at least integrase and the newly synthesized dsDNA copy of the retrotransposon must transit the nuclear membrane. Once in the nucleus, integrase performs the integration of the dsDNA into the host genome. This Saccharomyces cerevisiae (strain ATCC 204508 / S288c) (Baker's yeast) protein is Transposon Ty2-C Gag-Pol polyprotein (TY2B-C).